Here is a 1176-residue protein sequence, read N- to C-terminus: Pesticidal crystal protein Cry1Ag (1176 aa).

Belongs to the delta endotoxin family.

Functionally, promotes colloidosmotic lysis by binding to the midgut epithelial cells of many lepidopteran larvae. This Bacillus thuringiensis protein is Pesticidal crystal protein Cry1Ag (cry1Ag).